The following is a 527-amino-acid chain: MAMAMAMRRAAALGARHILAASSTSSSGVLLRRHMSVDAGAAMEKVRAAGLLRTQGLIGGKWVDAYDGKTIEVQNPATGETLANVSCMGSKETSDAIASAHSTFYSWSKLTANERSKALRKWHDLIISHKEELALLMTLEQGKPMKEALVEVTYGASFIEYFAEEAKRIYGDIIPPTLSDRRLLVLKQPVGVVGAVTPWNFPLAMITRKVGPALACGCTVVVKPSEFTPLTALAAADLALQAGIPAGAINVVMGNAPEIGDALLQSTQVRKITFTGSTAVGKKLMAGSANTVKKVSLELGGNAPCIVFDDADIDVAIKGSLAAKFRNSGQTCVCANRILVQEGIYEKFASAFIKAVQSLKVGNGLEESTSQGPLINEAAVQKVEKFINDATSKGANIMLGGKRHSLGMSFYEPTVVGNVSNDMLLFREEVFGPVAPLVPFKTEEDAIRMANDTNAGLAAYIFTKSIPRSWRVSEALEYGLVGVNEGIISTEVAPFGGVKQSGLGREGSKYGMDEYLELKYICMGNLN.

The N-terminal 35 residues, 1–35 (MAMAMAMRRAAALGARHILAASSTSSSGVLLRRHM), are a transit peptide targeting the mitochondrion. Residues R208, 223–226 (KPSE), and 276–281 (GSTAVG) contribute to the NAD(+) site. R208 is a substrate binding site. The Proton acceptor role is filled by E298. Substrate is bound by residues R326, C332, and S489. The active-site Nucleophile is C332. Cysteines 332 and 334 form a disulfide.

This sequence belongs to the aldehyde dehydrogenase family. Homotetramer.

The protein localises to the mitochondrion matrix. The enzyme catalyses succinate semialdehyde + NAD(+) + H2O = succinate + NADH + 2 H(+). It participates in amino-acid degradation; 4-aminobutanoate degradation. Its activity is regulated as follows. Redox-regulated. Inhibited under oxydizing conditions. In terms of biological role, oxidizes specifically succinate semialdehyde. Involved in plant response to environmental stress by preventing the accumulation of reactive oxygen species. This Oryza sativa subsp. japonica (Rice) protein is Succinate-semialdehyde dehydrogenase, mitochondrial (ALDH5F1).